A 314-amino-acid polypeptide reads, in one-letter code: Cathepsin L 2 (314 aa).

A signal peptide spans 1 to 24; the sequence is MMLLGASLYLNNTQEVSDEIDTAN. The propeptide at 25 to 109 is activation peptide; that stretch reads LYANWKMKYN…NASNANFQYK (85 aa). Intrachain disulfides connect cysteine 132/cysteine 175, cysteine 166/cysteine 207, and cysteine 259/cysteine 302. Cysteine 135 is an active-site residue. Catalysis depends on residues histidine 265 and asparagine 282.

This sequence belongs to the peptidase C1 family.

It localises to the secreted. It catalyses the reaction Specificity close to that of papain. As compared to cathepsin B, cathepsin L exhibits higher activity toward protein substrates, but has little activity on Z-Arg-Arg-NHMec, and no peptidyl-dipeptidase activity.. Functionally, may be involved in extracellular digestion. The sequence is that of Cathepsin L 2 from Paramecium tetraurelia.